Reading from the N-terminus, the 291-residue chain is Flavonol synthase/flavanone 3-hydroxylase (291 aa).

A Fe2OG dioxygenase domain is found at 151–250; the sequence is CWYVMNINHY…RMSWPVLVSP (100 aa). The Fe cation site is built by histidine 175, aspartate 177, and histidine 231.

It belongs to the iron/ascorbate-dependent oxidoreductase family. L-ascorbate is required as a cofactor. It depends on Fe cation as a cofactor.

It is found in the cytoplasm. The catalysed reaction is a (2R,3R)-dihydroflavonol + 2-oxoglutarate + O2 = a flavonol + succinate + CO2 + H2O. It catalyses the reaction a (2S)-flavan-4-one + 2-oxoglutarate + O2 = a (2R,3R)-dihydroflavonol + succinate + CO2. It participates in secondary metabolite biosynthesis; flavonoid biosynthesis. Its function is as follows. Catalyzes the formation of flavonols from dihydroflavonols. It can act on dihydrokaempferol to produce kaempferol, on dihydroquercetin to produce quercitin and on dihydromyricetin to produce myricetin. The polypeptide is Flavonol synthase/flavanone 3-hydroxylase (Matthiola incana (Common stock)).